We begin with the raw amino-acid sequence, 339 residues long: Phenylalanine--tRNA ligase alpha subunit (339 aa).

Residue Glu-247 participates in Mg(2+) binding.

It belongs to the class-II aminoacyl-tRNA synthetase family. Phe-tRNA synthetase alpha subunit type 1 subfamily. As to quaternary structure, tetramer of two alpha and two beta subunits. The cofactor is Mg(2+).

It is found in the cytoplasm. The catalysed reaction is tRNA(Phe) + L-phenylalanine + ATP = L-phenylalanyl-tRNA(Phe) + AMP + diphosphate + H(+). The polypeptide is Phenylalanine--tRNA ligase alpha subunit (Deinococcus deserti (strain DSM 17065 / CIP 109153 / LMG 22923 / VCD115)).